Here is a 192-residue protein sequence, read N- to C-terminus: Small ribosomal subunit protein bS16 (192 aa).

Residues glutamate 149 to alanine 161 are compositionally biased toward basic and acidic residues. Residues glutamate 149–glutamate 192 form a disordered region. Over residues methionine 178–glutamate 192 the composition is skewed to low complexity.

It belongs to the bacterial ribosomal protein bS16 family.

This is Small ribosomal subunit protein bS16 from Porphyromonas gingivalis (strain ATCC 33277 / DSM 20709 / CIP 103683 / JCM 12257 / NCTC 11834 / 2561).